A 509-amino-acid chain; its full sequence is Telomeric repeat-binding factor 2-interacting protein 1 (509 aa).

Positions 1–91 (MAALGGLTHS…KLLDVDDYRL (91 aa)) constitute a BRCT domain. Residues 93-168 (GSHGRPRKSQ…RKKENKMDCS (76 aa)) form a disordered region. A compositionally biased stretch (polar residues) spans 115–127 (VGESSQESDQKQQ). Over residues 159-168 (RKKENKMDCS) the composition is skewed to basic and acidic residues. Residues 185–239 (RRNVFTEKEDVAIMLYVRENAPHRGTGVSLWKEMEQKQVVKRTWQAIKNRYFRYL) form the Myb-like domain. Disordered regions lie at residues 249–359 (LTDD…ENQD) and 399–423 (DLPS…ESEG). Composition is skewed to basic and acidic residues over residues 286-296 (GVAEKTGEKLS) and 321-344 (VEER…KSTE). A compositionally biased stretch (polar residues) spans 401–418 (PSSQSQTQVDEVSSSPDA). The Nuclear localization signal signature appears at 493–509 (QKYGADNVAKRVAFLAS).

Belongs to the RAP1 family. In terms of assembly, homodimer. Component of the shelterin complex (telosome). Interacts with terf2; the interaction is direct.

The protein resides in the nucleus. The protein localises to the chromosome. It is found in the telomere. Acts both as a regulator of telomere function and as a transcription regulator. Involved in the regulation of telomere length and protection as a component of the shelterin complex (telosome). Does not bind DNA directly: recruited to telomeric double-stranded 5'-TTAGGG-3' repeats via its interaction with terf2. Independently of its function in telomeres, also acts as a transcription regulator: recruited to extratelomeric 5'-TTAGGG-3' sites via its association with terf2 or other factors, and regulates gene expression. This is Telomeric repeat-binding factor 2-interacting protein 1 (terf2ip) from Xenopus tropicalis (Western clawed frog).